Reading from the N-terminus, the 273-residue chain is F-actin-capping protein subunit alpha (273 aa).

This sequence belongs to the F-actin-capping protein alpha subunit family. Component of the F-actin capping complex, composed of a heterodimer of an alpha and a beta subunit.

It localises to the cytoplasm. It is found in the cytoskeleton. The protein localises to the actin patch. Functionally, F-actin-capping proteins bind in a Ca(2+)-independent manner to the fast growing ends of actin filaments (barbed end) thereby blocking the exchange of subunits at these ends. Unlike other capping proteins (such as gelsolin and severin), these proteins do not sever actin filaments. The chain is F-actin-capping protein subunit alpha (fac-1) from Neurospora crassa (strain ATCC 24698 / 74-OR23-1A / CBS 708.71 / DSM 1257 / FGSC 987).